We begin with the raw amino-acid sequence, 207 residues long: Large ribosomal subunit protein uL4 (207 aa).

The tract at residues 50-75 (KTKTVSEVSGTTKKPFKQKGTGNARQ) is disordered.

It belongs to the universal ribosomal protein uL4 family. As to quaternary structure, part of the 50S ribosomal subunit.

One of the primary rRNA binding proteins, this protein initially binds near the 5'-end of the 23S rRNA. It is important during the early stages of 50S assembly. It makes multiple contacts with different domains of the 23S rRNA in the assembled 50S subunit and ribosome. Its function is as follows. Forms part of the polypeptide exit tunnel. This is Large ribosomal subunit protein uL4 from Rickettsia akari (strain Hartford).